The sequence spans 533 residues: Adenosine deaminase (533 aa).

An N-terminal signal peptide occupies residues 1 to 19; the sequence is MKILLAVVFVLNLTNLAVP.

This sequence belongs to the metallo-dependent hydrolases superfamily. Adenosine and AMP deaminases family. ADGF subfamily. The cofactor is Zn(2+). In terms of processing, proteolytically cleaved by human mast cell tryptase and chymase. As to expression, female salivary gland (at protein level).

It is found in the secreted. It catalyses the reaction adenosine + H2O + H(+) = inosine + NH4(+). The catalysed reaction is 2'-deoxyadenosine + H2O + H(+) = 2'-deoxyinosine + NH4(+). Catalyzes the deamination of adenosine to inosine and deoxyadenosine to deoxyinosine. Induces degranulation of host mast cells, and secretion of tryptase and IL6. Modulates enzymatic activities of human tryptase and chymase. Induces release of cytokines, such as IL1B, IL6, TNF, CCL2, IFN-beta (INFB1) and ISG15, from host monocytes and macrophages. Activates host NF-kappa-B signaling pathway in TAK1/MAP3K7-dependent manner. Functionally, (Microbial infection) Promotes replication of dengue virus type 2 in host cells probably via modulation of cytokine production in host macrophages and monocytes. In Aedes albopictus (Asian tiger mosquito), this protein is Adenosine deaminase.